Here is a 436-residue protein sequence, read N- to C-terminus: MKRREFGALAAGALAMGLPFRAFADETCQSPYMPKITGQEEFVYVWTLGVEGMGDEQDKLVTIDLRPGSATRGQVINSVSVGGRNEAHHGGFSADRRFFWTGGLDTNRIFIFDVHSDPSNPKLHKTIDTFVKDSGGVVGPHTFFALPGSMMITGLSNDDDHGGRTALVEYNDDGEYVATYWMPTADDMQGAVAVGDAVADGYGYDIRALIRKNVMLTSSFTGWSNYMMDFGQMLQDAEAMKRFGNTIVQWDLHTRQPKKVFNVPGAPLEIRFPWGSNANYAFSTTALTSQLWLIYEDDAGEWQAKAVADIGNPADIPLPVDISIAADDQTLWINSFMDGKTRLFDISDPHKPFQIYEKVIDRQVNMVSQSWDGKRVYFSSSLLANWDKKGKDDAQYLKAYNWDGKELVEDFAVDFYELGLGRAHIMRFGSSALYSS.

The first 24 residues, 1–24 (MKRREFGALAAGALAMGLPFRAFA), serve as a signal peptide directing secretion.

This sequence belongs to the selenium-binding protein family.

Its subcellular location is the periplasm. The catalysed reaction is methanethiol + O2 + H2O = hydrogen sulfide + formaldehyde + H2O2 + H(+). It functions in the pathway organosulfur degradation. Catalyzes the oxidation of methanethiol. This is Methanethiol oxidase from Ruegeria pomeroyi (strain ATCC 700808 / DSM 15171 / DSS-3) (Silicibacter pomeroyi).